The sequence spans 90 residues: Acylphosphatase (90 aa).

The Acylphosphatase-like domain occupies C5 to L90. Active-site residues include R20 and N38.

It belongs to the acylphosphatase family.

The enzyme catalyses an acyl phosphate + H2O = a carboxylate + phosphate + H(+). This chain is Acylphosphatase (acyP), found in Vibrio vulnificus (strain CMCP6).